The following is a 69-amino-acid chain: Small cysteine-rich protein (69 aa).

The N-terminal stretch at 1–19 is a signal peptide; it reads MKLQLCLVLLLLGVLYVQS. The propeptide occupies 20-22; it reads VPE.

It belongs to the Cnidaria small cysteine-rich protein (SCRiP) family. delta subfamily. Contains 4 disulfide bonds.

The protein resides in the secreted. Its subcellular location is the nematocyst. In terms of biological role, induces neurotoxic symptoms on zebrafish. Has also been claimed to be implied in calcification, but this function seems improbable. This Metridium senile (Brown sea anemone) protein is Small cysteine-rich protein.